The primary structure comprises 191 residues: Probable GTP-binding protein EngB (191 aa).

Positions 19–188 constitute an EngB-type G domain; the sequence is NIPEICFMGR…HKKIFELFVE (170 aa). GTP contacts are provided by residues 27–34, 53–57, 70–73, 136–139, and 167–169; these read GRSNVGKS, GRTQL, DLPG, NKFD, and AST. Positions 34 and 55 each coordinate Mg(2+).

Belongs to the TRAFAC class TrmE-Era-EngA-EngB-Septin-like GTPase superfamily. EngB GTPase family. The cofactor is Mg(2+).

Necessary for normal cell division and for the maintenance of normal septation. The sequence is that of Probable GTP-binding protein EngB from Mycoplasma genitalium (strain ATCC 33530 / DSM 19775 / NCTC 10195 / G37) (Mycoplasmoides genitalium).